The sequence spans 306 residues: UDP-3-O-acyl-N-acetylglucosamine deacetylase (306 aa).

Zn(2+) is bound by residues histidine 79, histidine 238, and aspartate 242. Catalysis depends on histidine 265, which acts as the Proton donor.

Belongs to the LpxC family. Zn(2+) is required as a cofactor.

It carries out the reaction a UDP-3-O-[(3R)-3-hydroxyacyl]-N-acetyl-alpha-D-glucosamine + H2O = a UDP-3-O-[(3R)-3-hydroxyacyl]-alpha-D-glucosamine + acetate. It participates in glycolipid biosynthesis; lipid IV(A) biosynthesis; lipid IV(A) from (3R)-3-hydroxytetradecanoyl-[acyl-carrier-protein] and UDP-N-acetyl-alpha-D-glucosamine: step 2/6. Functionally, catalyzes the hydrolysis of UDP-3-O-myristoyl-N-acetylglucosamine to form UDP-3-O-myristoylglucosamine and acetate, the committed step in lipid A biosynthesis. The protein is UDP-3-O-acyl-N-acetylglucosamine deacetylase of Yersinia pseudotuberculosis serotype O:1b (strain IP 31758).